A 241-amino-acid chain; its full sequence is Biosynthetic peptidoglycan transglycosylase (241 aa).

A helical transmembrane segment spans residues 18-38 (GVIGIIALWMAGILIFAFLPV).

This sequence belongs to the glycosyltransferase 51 family.

The protein resides in the cell inner membrane. The catalysed reaction is [GlcNAc-(1-&gt;4)-Mur2Ac(oyl-L-Ala-gamma-D-Glu-L-Lys-D-Ala-D-Ala)](n)-di-trans,octa-cis-undecaprenyl diphosphate + beta-D-GlcNAc-(1-&gt;4)-Mur2Ac(oyl-L-Ala-gamma-D-Glu-L-Lys-D-Ala-D-Ala)-di-trans,octa-cis-undecaprenyl diphosphate = [GlcNAc-(1-&gt;4)-Mur2Ac(oyl-L-Ala-gamma-D-Glu-L-Lys-D-Ala-D-Ala)](n+1)-di-trans,octa-cis-undecaprenyl diphosphate + di-trans,octa-cis-undecaprenyl diphosphate + H(+). It participates in cell wall biogenesis; peptidoglycan biosynthesis. In terms of biological role, peptidoglycan polymerase that catalyzes glycan chain elongation from lipid-linked precursors. The chain is Biosynthetic peptidoglycan transglycosylase from Yersinia pestis bv. Antiqua (strain Antiqua).